The primary structure comprises 282 residues: Major surface antigen 4 (282 aa).

Residues 1-29 form the signal peptide; it reads MNYRELFTGGLSAATVCACSLLVSGAVVA.

Belongs to the surface antigen msp4 family.

This Anaplasma marginale protein is Major surface antigen 4 (msp4).